The chain runs to 296 residues: MLLLELLKALILGIVEGLTEFAPVSSTGHMILVDDMWLKSPEFLGSQSAFTFKIVIQLGSVFAAAWVFRKRYFEMLYIGKYQPAATETESADGKIGKRVKPKRLTLWHVLVGMIPAGILGLLFDDVIEKYLFSVPTVMIGLLLGAFYMIFAQKFSERYAHRENIDQITFFQAFVIGLSQAVAMWPGFSRSGSTISTGVLMKMNYKAASDFTFIMAVPIMLAASLLSLVKHIGYIHLSHIPFYIIGFLAAFIFGLLSIRLFLNLINRIKLIPFAIYRIILVIFIAILYFGFGIGKGI.

7 helical membrane-spanning segments follow: residues 48 to 68, 104 to 124, 131 to 151, 167 to 187, 208 to 228, 237 to 257, and 272 to 292; these read SAFTFKIVIQLGSVFAAAWVF, LTLWHVLVGMIPAGILGLLFD, LFSVPTVMIGLLLGAFYMIFA, ITFFQAFVIGLSQAVAMWPGF, SDFTFIMAVPIMLAASLLSLV, SHIPFYIIGFLAAFIFGLLSI, and FAIYRIILVIFIAILYFGFGI.

It belongs to the UppP family.

It is found in the cell membrane. The catalysed reaction is di-trans,octa-cis-undecaprenyl diphosphate + H2O = di-trans,octa-cis-undecaprenyl phosphate + phosphate + H(+). In terms of biological role, catalyzes the dephosphorylation of undecaprenyl diphosphate (UPP). Confers resistance to bacitracin. The sequence is that of Undecaprenyl-diphosphatase from Staphylococcus carnosus (strain TM300).